The following is a 364-amino-acid chain: MDRVWADWYEPVPSPPFSPVDPPGPRPTTPVPGSSPPSPASTPTPPKRGRYVVEHPEYGPPPDPEEVRVHGARGPGAFCAAPWRPDTRRLGADVNRLFRGIAVSAADVTGDTRALRRALFDFYAMGYTRQRPSAPCWQALLQLSPEQSAPLRSALRELNERDVYDPRVLSPPVIEGPLFGEECDVDEDDAGSDTTVASEFSFRGSVCEDDGEDEDEEEDGEEEDEDEEGEEEEDEEEEEGDEDGETDVYEEDDEAEDEEDEEDGDDFDGASVGDDDVFEPPEDGSDGEGSGSDDGGDGEDEDEDEDEDEDEDDGEDEEDEEGEDGGEDGEDGEEDEDEDGEGEEGGKDAARRGTRAPTRPAAAP.

Disordered stretches follow at residues 1–73 (MDRV…HGAR) and 173–364 (VIEG…AAAP). Residues 12–46 (VPSPPFSPVDPPGPRPTTPVPGSSPPSPASTPTPP) show a composition bias toward pro residues. Composition is skewed to acidic residues over residues 181-191 (EECDVDEDDAG), 207-286 (CEDD…DGSD), and 294-343 (DGGD…GEGE). A compositionally biased stretch (low complexity) spans 355–364 (RAPTRPAAAP).

This sequence belongs to the herpesviridae ICP22 family.

This chain is Transcriptional regulator ICP22 homolog (RSP40), found in Sus scrofa (Pig).